Here is a 72-residue protein sequence, read N- to C-terminus: SRY-related protein AES6 (72 aa).

Positions 1 to 69 form a DNA-binding region, HMG box; that stretch reads VKRPMNAFMV…KHMADYPDYK (69 aa).

It localises to the nucleus. This chain is SRY-related protein AES6, found in Alligator mississippiensis (American alligator).